A 2898-amino-acid polypeptide reads, in one-letter code: Pericentrin (2898 aa).

Residues 1–117 (MEDEQEQRRR…QPPPPQTAHS (117 aa)) are disordered. Residues 34–44 (SKKKTAKRKGS) show a composition bias toward basic residues. A Phosphoserine modification is found at S44. Coiled-coil stretches lie at residues 127–343 (LNNM…IRLL) and 382–434 (AQQQ…DSLE). The segment at 429–460 (REDSLESTEISSSCVLPEETSGREGKEPPDPL) is disordered. Residues 448-457 (TSGREGKEPP) show a composition bias toward basic and acidic residues. 4 coiled-coil regions span residues 468-527 (KVQE…LREK), 611-696 (CALQ…LETH), 727-787 (VADV…SLRM), and 872-939 (SQDQ…LRRL). S1022 bears the Phosphoserine mark. Coiled coils occupy residues 1069-1383 (EREF…QENM), 1429-1482 (NEVV…SLMG), and 1529-1593 (QLLA…AKEA). S1437 carries the phosphoserine modification. 3 disordered regions span residues 1745 to 1786 (VASR…DDVL), 1815 to 1880 (TQEK…PLTP), and 1958 to 1979 (TSPS…GPDI). Composition is skewed to polar residues over residues 1747–1766 (SRDT…SENG) and 1817–1834 (EKLT…SGHS). Positions 1801 to 1822 (NQDLLVQVEMPDFPTQEKLTSQ) are interaction with CDK5RAP2. Phosphoserine is present on residues S1828, S1859, S1860, and S1959. Residues 1963 to 1976 (ELARRSDGSRKSDG) show a composition bias toward basic and acidic residues. S1987 bears the Phosphoserine mark. Residues 2046-2055 (SESQDPSSAL) are compositionally biased toward polar residues. A disordered region spans residues 2046 to 2088 (SESQDPSSALNKGEPRDPLDGFPRDSQALSEVTTDKGEKESLE). Composition is skewed to basic and acidic residues over residues 2058–2068 (GEPRDPLDGFP) and 2078–2088 (TTDKGEKESLE). Phosphoserine is present on S2128. Coiled coils occupy residues 2211 to 2403 (KVEQ…EALQ) and 2429 to 2590 (HALL…ELSM). Disordered regions lie at residues 2509-2532 (VSGG…QFQE) and 2653-2684 (NRQS…QTTS). The tract at residues 2545–2810 (LCAAGLLTSF…SQRQRSPSGP (266 aa)) is interaction with NEK2. The segment covering 2653 to 2671 (NRQSKSSLKQDGTDLQSSL) has biased composition (polar residues). The calmodulin-binding stretch occupies residues 2758 to 2771 (KFRTAVRVVIAVLR). Positions 2787–2898 (ALVHPKSTRH…QKSCHQKIKQ (112 aa)) are disordered. Basic residues predominate over residues 2792 to 2802 (KSTRHGHRTSQ). Over residues 2845–2860 (TSTPSSRLERSLTASQ) the composition is skewed to polar residues. Residues 2861–2874 (DPEHSLTEYIHHLE) are compositionally biased toward basic and acidic residues. Phosphoserine is present on S2865.

Interacts with DISC1 and PCM1. Binds calmodulin. Interacts with CEP131. Interacts with CDK5RAP2; the interaction is leading to centrosomal localization of PCNT and CDK5RAP2. Interacts with CHD3. Interacts with CHD4; the interaction regulates centrosome integrity. Interacts with NEK2. Interacts with CCDC13. Interacts with CEP68. Interacts with ATF5; the ATF5:PCNT:polyglutamylated tubulin (PGT) tripartite unites the mother centriole and the pericentriolar material (PCM) in the centrosome. Cleaved during mitotis which leads to removal of CDK5RAP2 from the centrosome and promotes centriole disengagement and subsequent centriole separation. The C-terminal fragment is rapidly degraded following cleavage. In terms of processing, ubiquitinated by TRIM43; leading to proteasomal degradation. As to expression, expressed in heart and lung (at protein level). Expressed in kidney, thymus, liver, brain, muscle, testis, spleen, lung and heart.

The protein localises to the cytoplasm. Its subcellular location is the cytoskeleton. It is found in the microtubule organizing center. The protein resides in the centrosome. Functionally, integral component of the filamentous matrix of the centrosome involved in the initial establishment of organized microtubule arrays in both mitosis and meiosis. Plays a role, together with DISC1, in the microtubule network formation. Is an integral component of the pericentriolar material (PCM). May play an important role in preventing premature centrosome splitting during interphase by inhibiting NEK2 kinase activity at the centrosome. In Mus musculus (Mouse), this protein is Pericentrin (Pcnt).